A 609-amino-acid polypeptide reads, in one-letter code: Albumin (609 aa).

An N-terminal signal peptide occupies residues 1-18 (MKWVTFISLLFLFSSAYS). Positions 19–24 (RGVFRR) are excised as a propeptide. 3 consecutive Albumin domains span residues 19–210 (RGVF…DELR), 211–403 (DEGK…EFKP), and 404–601 (LVEE…KLVA). Residue histidine 27 participates in Cu cation binding. Phosphoserine is present on serine 29. Ca(2+) contacts are provided by glutamate 30 and aspartate 37. Cysteines 77 and 86 form a disulfide. A phosphoserine mark is found at serine 82 and serine 89. Residue histidine 91 coordinates Zn(2+). 6 cysteine pairs are disulfide-bonded: cysteine 99–cysteine 115, cysteine 114–cysteine 125, cysteine 148–cysteine 193, cysteine 192–cysteine 201, cysteine 224–cysteine 270, and cysteine 269–cysteine 277. Residue threonine 107 is modified to Phosphothreonine. The residue at position 229 (lysine 229) is an N6-succinyllysine. (4Z,15Z)-bilirubin IXalpha is bound at residue lysine 264. Glutamate 268 contributes to the Ca(2+) binding site. Positions 271 and 273 each coordinate Zn(2+). Aspartate 273, glutamate 276, aspartate 279, and aspartate 283 together coordinate Ca(2+). Cystine bridges form between cysteine 289-cysteine 303, cysteine 302-cysteine 313, cysteine 340-cysteine 385, cysteine 384-cysteine 393, cysteine 416-cysteine 462, cysteine 461-cysteine 472, cysteine 485-cysteine 501, and cysteine 500-cysteine 511. Serine 297 carries the phosphoserine modification. A Phosphoserine modification is found at serine 443. A phosphothreonine mark is found at threonine 444 and threonine 446. Lysine 460 is subject to N6-succinyllysine. Phosphoserine is present on serine 513. 2 cysteine pairs are disulfide-bonded: cysteine 538/cysteine 583 and cysteine 582/cysteine 591. Position 543 is an N6-succinyllysine (lysine 543). Lysine 558 is subject to N6-methyllysine. Threonine 570 carries the post-translational modification Phosphothreonine. An N6-succinyllysine modification is found at lysine 588.

It belongs to the ALB/AFP/VDB family. Interacts with FCGRT; this interaction regulates ALB homeostasis. Interacts with TASOR. In plasma, occurs in a covalently-linked complex with chromophore-bound alpha-1-microglobulin; this interaction does not prevent fatty acid binding to ALB. Post-translationally, phosphorylated by FAM20C in the extracellular medium. As to expression, plasma.

Its subcellular location is the secreted. Functionally, binds water, Ca(2+), Na(+), K(+), fatty acids, hormones, bilirubin and drugs. Its main function is the regulation of the colloidal osmotic pressure of blood. Major zinc transporter in plasma, typically binds about 80% of all plasma zinc. Major calcium and magnesium transporter in plasma, binds approximately 45% of circulating calcium and magnesium in plasma. Potentially has more than two calcium-binding sites and might additionally bind calcium in a non-specific manner. The shared binding site between zinc and calcium at residue Asp-273 suggests a crosstalk between zinc and calcium transport in the blood. The rank order of affinity is zinc &gt; calcium &gt; magnesium. Binds to the bacterial siderophore enterobactin and inhibits enterobactin-mediated iron uptake of E.coli from ferric transferrin, and may thereby limit the utilization of iron and growth of enteric bacteria such as E.coli. Does not prevent iron uptake by the bacterial siderophore aerobactin. The chain is Albumin (ALB) from Pongo abelii (Sumatran orangutan).